We begin with the raw amino-acid sequence, 231 residues long: Small ribosomal subunit protein uS3 (231 aa).

The 69-residue stretch at 39–107 folds into the KH type-2 domain; sequence IRELLHKELK…DVVLNIVEIR (69 aa).

The protein belongs to the universal ribosomal protein uS3 family. As to quaternary structure, part of the 30S ribosomal subunit. Forms a tight complex with proteins S10 and S14.

In terms of biological role, binds the lower part of the 30S subunit head. Binds mRNA in the 70S ribosome, positioning it for translation. This is Small ribosomal subunit protein uS3 from Nitrobacter winogradskyi (strain ATCC 25391 / DSM 10237 / CIP 104748 / NCIMB 11846 / Nb-255).